The chain runs to 859 residues: DNA mismatch repair protein MutS (859 aa).

622 to 629 lines the ATP pocket; that stretch reads GPNMGGKS.

The protein belongs to the DNA mismatch repair MutS family.

Its function is as follows. This protein is involved in the repair of mismatches in DNA. It is possible that it carries out the mismatch recognition step. This protein has a weak ATPase activity. The polypeptide is DNA mismatch repair protein MutS (Syntrophomonas wolfei subsp. wolfei (strain DSM 2245B / Goettingen)).